Here is a 367-residue protein sequence, read N- to C-terminus: MIDILNLTYDELEAWMTGTLGEPRFRARQVWQWLWQKNARSFDAMTNVSKATRARLAEAARITWPEVRTVKTSSDGTVKFLLALADGALVETVLIPSESREGKVRMTQCLSCQVGCAMGCTFCSTGSMGFERNMTMAEILGQVLVAREHLGDDRPDHPIVRNLVFMGMGEPLLNLNEVMRSLRTLNDEFGLCFSPRRITVSTCGIEKGLRELGESGLAFLAVSLHAPNQEVRARIMPRAARWTLDDLMAALESYPLKTRERITFEYLLLGGVNDSIDHARELVRLVSRTKAKLNLIVYNPAEGLPYEAPSQARILAFEQYLWSKNVTAIIRKSKGQDIKAACGQLKASELAELAGMAVTEEPKKEAE.

Glutamate 91 functions as the Proton acceptor in the catalytic mechanism. A Radical SAM core domain is found at 102–337; that stretch reads GKVRMTQCLS…AIIRKSKGQD (236 aa). A disulfide bridge links cysteine 109 with cysteine 342. [4Fe-4S] cluster-binding residues include cysteine 116, cysteine 120, and cysteine 123. Residues 169-170, serine 201, 223-225, and asparagine 299 each bind S-adenosyl-L-methionine; these read GE and SLH. Cysteine 342 acts as the S-methylcysteine intermediate in catalysis.

Belongs to the radical SAM superfamily. RlmN family. The cofactor is [4Fe-4S] cluster.

The protein localises to the cytoplasm. The catalysed reaction is adenosine(2503) in 23S rRNA + 2 reduced [2Fe-2S]-[ferredoxin] + 2 S-adenosyl-L-methionine = 2-methyladenosine(2503) in 23S rRNA + 5'-deoxyadenosine + L-methionine + 2 oxidized [2Fe-2S]-[ferredoxin] + S-adenosyl-L-homocysteine. It catalyses the reaction adenosine(37) in tRNA + 2 reduced [2Fe-2S]-[ferredoxin] + 2 S-adenosyl-L-methionine = 2-methyladenosine(37) in tRNA + 5'-deoxyadenosine + L-methionine + 2 oxidized [2Fe-2S]-[ferredoxin] + S-adenosyl-L-homocysteine. Its function is as follows. Specifically methylates position 2 of adenine 2503 in 23S rRNA and position 2 of adenine 37 in tRNAs. m2A2503 modification seems to play a crucial role in the proofreading step occurring at the peptidyl transferase center and thus would serve to optimize ribosomal fidelity. The sequence is that of Dual-specificity RNA methyltransferase RlmN from Nitratidesulfovibrio vulgaris (strain DSM 19637 / Miyazaki F) (Desulfovibrio vulgaris).